The primary structure comprises 242 residues: Adenosine 5'-phosphosulfate reductase (242 aa).

Residues Cys125, Cys126, Cys208, and Cys211 each contribute to the [4Fe-4S] cluster site. The active-site Nucleophile; cysteine thiosulfonate intermediate is the Cys234.

It belongs to the PAPS reductase family. CysH subfamily. It depends on [4Fe-4S] cluster as a cofactor.

It is found in the cytoplasm. The catalysed reaction is [thioredoxin]-disulfide + sulfite + AMP + 2 H(+) = adenosine 5'-phosphosulfate + [thioredoxin]-dithiol. Its pathway is sulfur metabolism; hydrogen sulfide biosynthesis; sulfite from sulfate. Functionally, catalyzes the formation of sulfite from adenosine 5'-phosphosulfate (APS) using thioredoxin as an electron donor. This chain is Adenosine 5'-phosphosulfate reductase, found in Staphylococcus saprophyticus subsp. saprophyticus (strain ATCC 15305 / DSM 20229 / NCIMB 8711 / NCTC 7292 / S-41).